Consider the following 258-residue polypeptide: Ureidoacrylate amidohydrolase RutB (258 aa).

The disordered stretch occupies residues 1 to 23 (MDRPTTYPMDQPAGFRDAQGRHG). Asp47 serves as the catalytic Proton acceptor. Lys156 is an active-site residue. The Nucleophile role is filled by Cys189.

It belongs to the isochorismatase family. RutB subfamily.

It carries out the reaction (Z)-3-ureidoacrylate + H2O + H(+) = (Z)-3-aminoacrylate + NH4(+) + CO2. It catalyses the reaction (Z)-3-ureidoacrylate + H2O = (Z)-3-aminoacrylate + carbamate + H(+). The catalysed reaction is (Z)-2-methylureidoacrylate + H2O + H(+) = (Z)-2-methylaminoacrylate + NH4(+) + CO2. Functionally, hydrolyzes ureidoacrylate to form aminoacrylate and carbamate. The carbamate hydrolyzes spontaneously, thereby releasing one of the nitrogen atoms of the pyrimidine ring as ammonia and one of its carbon atoms as CO2. This chain is Ureidoacrylate amidohydrolase RutB, found in Methylobacterium radiotolerans (strain ATCC 27329 / DSM 1819 / JCM 2831 / NBRC 15690 / NCIMB 10815 / 0-1).